Reading from the N-terminus, the 213-residue chain is Bcl-2-related ovarian killer protein (213 aa).

Positions 32-44 (KALCRDYINSRLI) match the BH4 motif. The BH3 motif lies at 67–83 (VSAILLRLGDELEYIRP). The BH1 signature appears at 113–132 (QIFTAGITWGKVVSLYAVAA). The short motif at 165–179 (WLKRRGGWADITKCV) is the BH2 element. Residues 190–210 (WLVAAVCSFGHFLKAIFFVLL) traverse the membrane as a helical segment.

It belongs to the Bcl-2 family.

It localises to the membrane. In terms of biological role, may play a role in apoptosis. This is Bcl-2-related ovarian killer protein from Gallus gallus (Chicken).